The sequence spans 532 residues: MVSRLEHPAGGYKKVFESCEELAEPIPAHVSGKIPAWLSGSLLRMGPGLFEIGDEPFNHLFDGQALIHKFDLKDGRVTYHRKFIRTDAYVRAMTEKRVVITELGTAAYPDPCKNIFSRFFTYFQGTEVTDNCSVNIYPIGEDFYACTETNFITKVNPDTLETIKKVDLCNYLSVNGLTAHPHIEADGTVYNIGNCFGKNMSLAYNIVKIPPLQEEKSDPLAMSKVLVQFPSSERFKPSYVHSFGMTENHFVFVETPVKINLLKFLTSWSIRGSNYMDCFESNDRMGTWFHLAAKNPGKYIDHKFRTSAFNIFHHINCFEDQGFIVVDLCTWKGHEFVYNYLYLANLRQNWEEVKKAALRAPQPEVRRYVLPLDIHREEQGKNLVSLPYTTATAVMCSDGTVWLEPEVLFSGPRQAFEFPQINYSKFNGKDYTFAYGLGLNHFVPDRICKLNVKSKETWIWQEPDAYPSEPLFVQSPDAEDEDDGVLLSIVVKPGVSQRPAFLLILKATDLTEIARAEVDVLIPLTLHGIYKP.

Cys-112 carries S-palmitoyl cysteine; in membrane form lipidation. Positions 180, 241, and 313 each coordinate Fe cation. A lipid anchor (S-palmitoyl cysteine; in membrane form) is attached at Cys-329. His-527 is a Fe cation binding site.

It belongs to the carotenoid oxygenase family. It depends on Fe(2+) as a cofactor. Post-translationally, palmitoylated. As to expression, predominantly expressed in brain. Expressed at a low level in the eye.

The protein resides in the cytoplasm. It localises to the cell membrane. The enzyme catalyses an all-trans-retinyl ester + H2O = 13-cis-retinol + a fatty acid + H(+). The catalysed reaction is lutein = (3R,3'S)-zeaxanthin. In terms of biological role, specifically generates 13-cis retinol, a stereoisomeric form of retinoic acid. Capable of catalyzing the isomerization of lutein to meso-zeaxanthin an eye-specific carotenoid. This is All-trans-retinyl ester 13-cis isomerohydrolase (rpe65b) from Danio rerio (Zebrafish).